The sequence spans 331 residues: Biotin synthase (331 aa).

One can recognise a Radical SAM core domain in the interval 43 to 267; the sequence is NTVQVSTLLS…LMPASYVRLS (225 aa). Cys58, Cys62, and Cys65 together coordinate [4Fe-4S] cluster. Residues Cys102, Cys133, Cys193, and Arg265 each coordinate [2Fe-2S] cluster.

Belongs to the radical SAM superfamily. Biotin synthase family. Homodimer. [4Fe-4S] cluster serves as cofactor. Requires [2Fe-2S] cluster as cofactor.

The enzyme catalyses (4R,5S)-dethiobiotin + (sulfur carrier)-SH + 2 reduced [2Fe-2S]-[ferredoxin] + 2 S-adenosyl-L-methionine = (sulfur carrier)-H + biotin + 2 5'-deoxyadenosine + 2 L-methionine + 2 oxidized [2Fe-2S]-[ferredoxin]. The protein operates within cofactor biosynthesis; biotin biosynthesis; biotin from 7,8-diaminononanoate: step 2/2. Catalyzes the conversion of dethiobiotin (DTB) to biotin by the insertion of a sulfur atom into dethiobiotin via a radical-based mechanism. This Alkalilimnicola ehrlichii (strain ATCC BAA-1101 / DSM 17681 / MLHE-1) protein is Biotin synthase.